The chain runs to 551 residues: Cleavage and polyadenylation specificity factor subunit 6 (551 aa).

The interval 1 to 213 is necessary for interaction with NXF1; that stretch reads MADGVDHIDI…RGRFPGAVPG (213 aa). Positions 81-161 constitute an RRM domain; it reads IALYIGNLTW…QSPVVTPCNK (81 aa). The interval 81 to 161 is necessary for interaction with NUDT21/CPSF5; sequence IALYIGNLTW…QSPVVTPCNK (81 aa). The segment at 81 to 161 is necessary for nuclear paraspeckles localization; that stretch reads IALYIGNLTW…QSPVVTPCNK (81 aa). Residue Thr157 is modified to Phosphothreonine. The segment covering 169–180 has biased composition (polar residues); the sequence is MQSRKTTQSGQM. 2 disordered regions span residues 169-411 and 477-551; these read MQSR…PLSE and LHGI…YRHR. The span at 184–193 shows a compositional bias: gly residues; it reads GKAGPPGGGS. A GAR motif is present at residues 202–206; the sequence is RGRGR. Residues 207 to 219 are compositionally biased toward low complexity; it reads FPGAVPGGDRFPG. 3 stretches are compositionally biased toward pro residues: residues 220-265, 285-366, and 377-388; these read PAGP…PLAG, GQPP…PPPT, and GPPPTDPYGRPP. The segment covering 389-404 has biased composition (basic and acidic residues); the sequence is PYDRGDYGPPGREMDT. Phosphothreonine is present on residues Thr404 and Thr407. Residues 404 to 551 form a sufficient for nuclear speckle localization region; it reads TARTPLSEAE…RDREREYRHR (148 aa). The tract at residues 405–551 is necessary for RNA-binding; that stretch reads ARTPLSEAEF…RDREREYRHR (147 aa). Residues 481-551 are necessary for interaction with SRSF3, SRSF7 and TRA2B/SFRS10; the sequence is ESKSYGSGSR…RDREREYRHR (71 aa). Residues 489–503 show a composition bias toward basic and acidic residues; the sequence is SRRERSRERDHSRSR. Residues 490 to 551 are arg/Ser-rich domain; sequence RRERSRERDH…RDREREYRHR (62 aa). Phosphoserine occurs at positions 494, 500, 511, 513, and 525. Positions 504 to 514 are enriched in basic residues; the sequence is EKSRRHKSRSR. The interval 510 to 551 is sufficient for nuclear targeting; it reads KSRSRDRHDDYYRERSRERERHRDRDRDRDRERDREREYRHR. Positions 515 to 551 are enriched in basic and acidic residues; that stretch reads DRHDDYYRERSRERERHRDRDRDRDRERDREREYRHR.

This sequence belongs to the RRM CPSF6/7 family. As to quaternary structure, component of the cleavage factor Im (CFIm) complex which is a heterotetramer composed of two subunits of NUDT21/CPSF5 and two subunits of CPSF6 or CPSF7 or a heterodimer of CPSF6 and CPSF7. The cleavage factor Im (CFIm) complex associates with the CPSF and CSTF complexes to promote the assembly of the core mRNA 3'-processing machinery. Associates with the exon junction complex (EJC). Associates with the 80S ribosome particle. Interacts (via the RRM domain) with NUDT21/CPSF5; this interaction is direct and enhances binding to RNA. Interacts (via Arg/Ser-rich domain) with FIP1L1 (preferentially via unphosphorylated form and Arg/Glu/Asp-rich domain); this interaction mediates, at least in part, the interaction between the CFIm and CPSF complexes and may be inhibited by CPSF6 hyper-phosphorylation. Interacts (via N-terminus) with NXF1; this interaction is direct. Interacts with SRSF3. Interacts with SRSF7. Interacts with SNRNP70. Interacts with TRA2B/SFRS10. Interacts with UPF1. Interacts with UPF3B. Interacts with VIRMA. Interacts (via Arg/Ser-rich domain) with TNPO3; promoting nuclear import of CPSF6 independently of its phosphorylation status. Interacts with YTHDC1. Phosphorylated. Phosphorylated in the Arg/Ser-rich domain by SRPK1, in vitro. In terms of processing, symmetrically dimethylated on arginine residues by PRMT5 in a WDR77- and CLNS1A-dependent manner. Asymmetrically dimethylated on arginine residues by PRMT1. Post-translationally, symmetrically dimethylated on arginine residues in the GAR motif by PRMT5 in a WDR77- and CLNS1A-dependent manner. Asymmetrically dimethylated on arginine residues in the GAR motif by PRMT1. Expressed in testis. Expressed in male germ cells (at protein level).

Its subcellular location is the nucleus. The protein localises to the nucleoplasm. It localises to the nucleus speckle. The protein resides in the cytoplasm. Component of the cleavage factor Im (CFIm) complex that functions as an activator of the pre-mRNA 3'-end cleavage and polyadenylation processing required for the maturation of pre-mRNA into functional mRNAs. CFIm contributes to the recruitment of multiprotein complexes on specific sequences on the pre-mRNA 3'-end, so called cleavage and polyadenylation signals (pA signals). Most pre-mRNAs contain multiple pA signals, resulting in alternative cleavage and polyadenylation (APA) producing mRNAs with variable 3'-end formation. The CFIm complex acts as a key regulator of cleavage and polyadenylation site choice during APA through its binding to 5'-UGUA-3' elements localized in the 3'-untranslated region (UTR) for a huge number of pre-mRNAs. CPSF6 enhances NUDT21/CPSF5 binding to 5'-UGUA-3' elements localized upstream of pA signals and promotes RNA looping, and hence activates directly the mRNA 3'-processing machinery. Plays a role in mRNA export. The sequence is that of Cleavage and polyadenylation specificity factor subunit 6 from Mus musculus (Mouse).